A 148-amino-acid polypeptide reads, in one-letter code: UPF0735 ACT domain-containing protein Dred_1164 (148 aa).

An ACT domain is found at 72 to 147; it reads TLALLMEHQP…GVREVRLVGQ (76 aa).

The protein belongs to the UPF0735 family.

This chain is UPF0735 ACT domain-containing protein Dred_1164, found in Desulforamulus reducens (strain ATCC BAA-1160 / DSM 100696 / MI-1) (Desulfotomaculum reducens).